Here is a 757-residue protein sequence, read N- to C-terminus: Alcohol dehydrogenase (quinone), dehydrogenase subunit (757 aa).

A signal peptide spans 1 to 34 (MTSGLLTPIKVTKKRLLSCAAALAFSAAVPVAFA). At Gln-35 the chain carries Pyrrolidone carboxylic acid. Pyrroloquinoline quinone is bound at residue Glu-95. An intrachain disulfide couples Cys-141 to Cys-142. A pyrroloquinoline quinone-binding site is contributed by Arg-147. Glu-215 contributes to the Ca(2+) binding site. Residue Thr-277 coordinates pyrroloquinoline quinone. The Ca(2+) site is built by Asn-297 and Asp-342. Residue Asp-342 is the Proton acceptor of the active site. Positions 369 and 588 each coordinate pyrroloquinoline quinone. The Cytochrome c domain maps to 640–719 (ARQKDGYFMY…DIRNFIVKRA (80 aa)). Positions 653, 656, 657, and 696 each coordinate heme c. Positions 726–757 (EVKARENSTGVPNDQFLNVPQSTADVPTADHP) are disordered. A compositionally biased stretch (polar residues) spans 732-750 (NSTGVPNDQFLNVPQSTAD).

Belongs to the bacterial PQQ dehydrogenase family. As to quaternary structure, the alcohol dehydrogenase multicomponent enzyme system is composed of a dehydrogenase subunit I (AdhA), a cytochrome c subunit II (AdhB) and a subunit III (AdhS). Pyrroloquinoline quinone is required as a cofactor. Ca(2+) serves as cofactor. The cofactor is heme c.

The protein localises to the cell membrane. It carries out the reaction ethanol + a ubiquinone = a ubiquinol + acetaldehyde. Its activity is regulated as follows. 2,6-dichloro-4-dicyanovinylphenol (PC16) and antimycin A inhibit ubiquinol oxidation activity more selectively than the ubiquinone reductase activity. Functionally, dehydrogenase component of the alcohol dehydrogenase multicomponent enzyme system which is involved in the production of acetic acid and in the ethanol oxidase respiratory chain. Quinohemoprotein alcohol dehydrogenase (ADH) catalyzes the oxidation of ethanol to acetaldehyde by transferring electrons to the ubiquinone embedded in the membrane phospholipids. The electrons transfer from ethanol to membranous ubiquinone occurs from pyrroloquinoline quinone (PQQ) to one heme c in subunit I (AdhA), and finally to two heme c in subunit II (AdhB). Besides ubiquinone reduction, ADH also has a ubiquinol (QH2) oxidation reaction which mediates electron transfer from ubiquinol to the non-energy generating bypass oxidase system. The electrons transfer occurs from ubiquinol (QH2) to the additional heme c within subunit II (AdhB). Also able to use quinone analogs such as 2,3-dimethoxy-5-methyl-6-n-decyl-1,4-benzoquinone (DB) and 2,3-dimethoxy-5-methyl-6-n-pentyl-1,4-benzoquinone (PB). The chain is Alcohol dehydrogenase (quinone), dehydrogenase subunit from Gluconobacter oxydans (strain 621H) (Gluconobacter suboxydans).